The following is a 1088-amino-acid chain: Extended synaptotagmin-1 (1088 aa).

Met-1 is modified (N-acetylmethionine). Topologically, residues 1-30 (MERSPEEGAGPEPSGQSPATDSTRERDGGS) are cytoplasmic. The disordered stretch occupies residues 1–38 (MERSPEEGAGPEPSGQSPATDSTRERDGGSGVPPAGPG). The chain crosses the membrane as a helical span at residues 31–51 (GVPPAGPGAASEALAVLTSFG). The Lumenal segment spans residues 52 to 54 (RRL). The chain crosses the membrane as a helical span at residues 55–75 (LVLVPVYLAGAAGLSVGFVLF). At 76–1088 (GLALYLGWRR…LIDDRDKGGS (1013 aa)) the chain is on the cytoplasmic side. One can recognise an SMP-LTD domain in the interval 127-305 (DVEKAEWLNK…LPNRLLVPLV (179 aa)). C2 domains lie at 304–425 (LVPD…DNWY), 446–572 (DAEK…QLSS), 618–740 (DAPP…DEWL), and 771–888 (QVNS…ALSG). Ser-316 carries the phosphoserine; by CDK5 modification. Ca(2+) is bound by residues Lys-336, Asp-337, Asp-349, Asp-396, Asp-398, Asp-400, Asp-402, and Asp-403. Positions 599–630 (TEPGAQDWDSESPETGSSVDAPPRPYHTTPNS) are disordered. Lys-806 bears the N6-acetyllysine mark. Ser-809 is subject to Phosphoserine. The tract at residues 911–930 (HSHSSSSLNEEPEVLGDPTH) is disordered. Residues Ser-933 and Ser-947 each carry the phosphoserine modification. The C2 5 domain occupies 955–1077 (PLGQVKLTVW…DLSQGAAQWY (123 aa)). Position 993 is a phosphotyrosine (Tyr-993). The required for phosphatidylinositol 4,5-bisphosphate-dependent location at the cell membrane stretch occupies residues 1002–1009 (KNRGTKRK).

It belongs to the extended synaptotagmin family. As to quaternary structure, interacts with ESYT2 and ESYT3. Interacts with ADGRD1; inhibiting the G-protein-coupled receptor activity of ADGRD1. Interaction with ADGRD1 is abolished when cytosolic calcium increases, relieving ADGRD1 G-protein-coupled receptor activity. Interacts (phosphorylated form) with SLC2A4. Post-translationally, phosphorylated on Ser residues in insulin-treated adipocytes (in vitro); this promotes interaction with SLC2A4. In terms of tissue distribution, ubiquitously expressed with a higher expression in spleen and white adipose tissue.

The protein resides in the endoplasmic reticulum membrane. Its subcellular location is the cell membrane. Functionally, binds calcium (via the C2 domains) and translocates to sites of contact between the endoplasmic reticulum and the cell membrane in response to increased cytosolic calcium levels. Helps tether the endoplasmic reticulum to the cell membrane and promotes the formation of appositions between the endoplasmic reticulum and the cell membrane. Acts as an inhibitor of ADGRD1 G-protein-coupled receptor activity in absence of cytosolic calcium. Binds glycerophospholipids in a barrel-like domain and may play a role in cellular lipid transport. The polypeptide is Extended synaptotagmin-1 (Esyt1) (Rattus norvegicus (Rat)).